The chain runs to 216 residues: Cytochrome c biogenesis ATP-binding export protein CcmA (216 aa).

The ABC transporter domain maps to leucine 2 to glycine 215. Residue glycine 34 to threonine 41 coordinates ATP.

This sequence belongs to the ABC transporter superfamily. CcmA exporter (TC 3.A.1.107) family. In terms of assembly, the complex is composed of two ATP-binding proteins (CcmA) and two transmembrane proteins (CcmB).

It localises to the cell inner membrane. It carries out the reaction heme b(in) + ATP + H2O = heme b(out) + ADP + phosphate + H(+). Its function is as follows. Part of the ABC transporter complex CcmAB involved in the biogenesis of c-type cytochromes; once thought to export heme, this seems not to be the case, but its exact role is uncertain. Responsible for energy coupling to the transport system. In Photobacterium profundum (strain SS9), this protein is Cytochrome c biogenesis ATP-binding export protein CcmA.